The chain runs to 138 residues: Cellular retinoic acid-binding protein 2 (138 aa).

The Nuclear localization signal signature appears at 21-31 (KALGVNMMMRK). Residue Lys-102 forms a Glycyl lysine isopeptide (Lys-Gly) (interchain with G-Cter in SUMO) linkage. 133-135 (RVY) contributes to the all-trans-retinoate binding site.

This sequence belongs to the calycin superfamily. Fatty-acid binding protein (FABP) family. As to quaternary structure, interacts with importin alpha. Interacts with RXR and RARA. In terms of processing, sumoylated in response to retinoic acid binding, sumoylation is critical for dissociation from ER and subsequent nuclear translocation. In terms of tissue distribution, embryo and skin of adult mouse.

Its subcellular location is the cytoplasm. The protein resides in the endoplasmic reticulum. It is found in the nucleus. In terms of biological role, transports retinoic acid to the nucleus. Regulates the access of retinoic acid to the nuclear retinoic acid receptors. The protein is Cellular retinoic acid-binding protein 2 (Crabp2) of Mus musculus (Mouse).